We begin with the raw amino-acid sequence, 138 residues long: Large ribosomal subunit protein bL19 (138 aa).

Belongs to the bacterial ribosomal protein bL19 family.

Functionally, this protein is located at the 30S-50S ribosomal subunit interface and may play a role in the structure and function of the aminoacyl-tRNA binding site. This is Large ribosomal subunit protein bL19 from Rickettsia canadensis (strain McKiel).